A 323-amino-acid chain; its full sequence is tRNA U34 carboxymethyltransferase (323 aa).

Carboxy-S-adenosyl-L-methionine-binding positions include lysine 91, tryptophan 105, lysine 110, glycine 130, 152-154, 181-182, methionine 196, tyrosine 200, and arginine 315; these read DPT and IE.

This sequence belongs to the class I-like SAM-binding methyltransferase superfamily. CmoB family. In terms of assembly, homotetramer.

The catalysed reaction is carboxy-S-adenosyl-L-methionine + 5-hydroxyuridine(34) in tRNA = 5-carboxymethoxyuridine(34) in tRNA + S-adenosyl-L-homocysteine + H(+). In terms of biological role, catalyzes carboxymethyl transfer from carboxy-S-adenosyl-L-methionine (Cx-SAM) to 5-hydroxyuridine (ho5U) to form 5-carboxymethoxyuridine (cmo5U) at position 34 in tRNAs. The protein is tRNA U34 carboxymethyltransferase of Escherichia coli O7:K1 (strain IAI39 / ExPEC).